The following is a 161-amino-acid chain: SsrA-binding protein (161 aa).

Positions 138–161 (DKRTDSKEKDWNRDKARIMKSSLR) are disordered. Residues 139-154 (KRTDSKEKDWNRDKAR) show a composition bias toward basic and acidic residues.

The protein belongs to the SmpB family.

It localises to the cytoplasm. Functionally, required for rescue of stalled ribosomes mediated by trans-translation. Binds to transfer-messenger RNA (tmRNA), required for stable association of tmRNA with ribosomes. tmRNA and SmpB together mimic tRNA shape, replacing the anticodon stem-loop with SmpB. tmRNA is encoded by the ssrA gene; the 2 termini fold to resemble tRNA(Ala) and it encodes a 'tag peptide', a short internal open reading frame. During trans-translation Ala-aminoacylated tmRNA acts like a tRNA, entering the A-site of stalled ribosomes, displacing the stalled mRNA. The ribosome then switches to translate the ORF on the tmRNA; the nascent peptide is terminated with the 'tag peptide' encoded by the tmRNA and targeted for degradation. The ribosome is freed to recommence translation, which seems to be the essential function of trans-translation. The sequence is that of SsrA-binding protein from Aliivibrio fischeri (strain MJ11) (Vibrio fischeri).